A 349-amino-acid chain; its full sequence is KH domain-containing, RNA-binding, signal transduction-associated protein 2 (349 aa).

Residues 65 to 135 (LIPVKQYPKF…HLSDELHVLI (71 aa)) form the KH domain. Disordered regions lie at residues 181-263 (SEES…PPPA) and 321-349 (EWATTRSSLKAPPPRSARGGYREHPYGRY). Residues 218-231 (RGVLTPRGTTVTRG) are compositionally biased toward low complexity. An omega-N-methylarginine mark is found at arginine 230 and arginine 240. Residues 340–349 (GYREHPYGRY) are compositionally biased toward basic and acidic residues.

Belongs to the KHDRBS family. In terms of assembly, self-associates to form homooligomers. Interacts with KHDRBS1/SAM68; heterooligomer formation of KHDRBS family proteins may modulate RNA substrate specificity. Interacts with RBMX, SAFB, SFRS9 and YTHDC1. Interacts with FYN and PLCG1 (via SH3 domain). Interacts (phosphorylated) with FYN, GRB2, PLCG1 and RASA1 (via SH2 domain). Methylated. Post-translationally, tyrosine phosphorylated by FYN, PTK6 and SRC. Tyrosine phosphorylated by SRC during mitosis. In terms of tissue distribution, expressed in heart, skin, brain, colon, spleen, kidney, cervix and testis. In adult cerebellum expressed predominantly in Purkinje cells and in the hippocampus is abundantly expressed in glutamatergic dentate granule cells and in specific inhibitory Schaffer collateral-associated and path-associated interneurons; expression is restricted to neuronal subpopulations largely non-overlapping with expression of KHDRBS3/SLM-2 (at protein level).

It localises to the nucleus. Its function is as follows. RNA-binding protein that plays a role in the regulation of alternative splicing and influences mRNA splice site selection and exon inclusion. Binds both poly(A) and poly(U) homopolymers. Phosphorylation by PTK6 inhibits its RNA-binding ability. Induces an increased concentration-dependent incorporation of exon in CD44 pre-mRNA by direct binding to purine-rich exonic enhancer. Can regulate alternative splicing of neurexins NRXN1-3 in the laminin G-like domain 6 containing the evolutionary conserved neurexin alternative spliced segment 4 (AS4) involved in neurexin selective targeting to postsynaptic partners. Regulates cell-type specific alternative splicing of NRXN1 at AS4 and acts synergystically with SAM68 in exon skipping. In contrast acts antagonistically with SAM68 in NRXN3 exon skipping at AS4. Its phosphorylation by FYN inhibits its ability to regulate splice site selection. May function as an adapter protein for Src kinases during mitosis. The protein is KH domain-containing, RNA-binding, signal transduction-associated protein 2 (Khdrbs2) of Mus musculus (Mouse).